Reading from the N-terminus, the 29-residue chain is Potassium channel toxin alpha-KTx 3.15 (29 aa).

A disulfide bridge links cysteine 8 with cysteine 27.

Belongs to the short scorpion toxin superfamily. Potassium channel inhibitor family. Alpha-KTx 03 subfamily. As to expression, expressed by the venom gland.

It localises to the secreted. May play a role in blocking voltage-gated potassium channels Kv1.1/KCNA1, Kv1.3/KCNA3 and Kv1.6/KCNA6. The chain is Potassium channel toxin alpha-KTx 3.15 from Mesobuthus gibbosus (Mediterranean checkered scorpion).